The primary structure comprises 211 residues: Large ribosomal subunit protein uL4 (211 aa).

The disordered stretch occupies residues 40–85 (QQAHSRQGTASTLTRSEVRGGGRKPYKQKGTGRARQGSIRTPLRPG). The segment covering 41-54 (QAHSRQGTASTLTR) has biased composition (polar residues). Basic residues predominate over residues 60-71 (GGRKPYKQKGTG).

It belongs to the universal ribosomal protein uL4 family. Part of the 50S ribosomal subunit.

In terms of biological role, one of the primary rRNA binding proteins, this protein initially binds near the 5'-end of the 23S rRNA. It is important during the early stages of 50S assembly. It makes multiple contacts with different domains of the 23S rRNA in the assembled 50S subunit and ribosome. Forms part of the polypeptide exit tunnel. This is Large ribosomal subunit protein uL4 from Prochlorococcus marinus (strain NATL2A).